The following is a 437-amino-acid chain: 5-hydroxytryptamine receptor 3B (437 aa).

A signal peptide spans 1-21; it reads MILLWSCLLVAVVGILGTATP. At 22 to 235 the chain is on the extracellular side; that stretch reads QPGNSSLHRL…RFNVVIRRCP (214 aa). N25, N92, and N134 each carry an N-linked (GlcNAc...) asparagine glycan. C151 and C165 are oxidised to a cystine. The helical transmembrane segment at 236-255 threads the bilayer; the sequence is LAYVVSLLIPSIFLMLVDLG. The Cytoplasmic segment spans residues 256 to 266; it reads SFYLPPNCRAR. The chain crosses the membrane as a helical span at residues 267 to 284; the sequence is IVFKTNVLVGYTVFRVNM. Residues 285 to 295 are Extracellular-facing; it reads SDEVPRSAGCT. The helical transmembrane segment at 296-324 threads the bilayer; it reads SLIGVFFTVCMALLVLSLSKSILLIKFLY. Residues 325–410 lie on the Cytoplasmic side of the membrane; it reads EERHSEQERP…WLAILCHFDQ (86 aa). Residues 377–409 form an HA-stretch; determines single-channel conductance in 5-HT3 receptors region; the sequence is FWFQLQSINNSLRTRDQVYQKEVEWLAILCHFD. A helical transmembrane segment spans residues 411–434; sequence LLFRIYLAVLGLYTVTLCSLWALW. Over 435 to 437 the chain is Extracellular; sequence SRM.

It belongs to the ligand-gated ion channel (TC 1.A.9) family. 5-hydroxytryptamine receptor (TC 1.A.9.2) subfamily. HTR3B sub-subfamily. As to quaternary structure, forms homopentameric as well as heteropentameric serotonin-activated cation-selective channel complexes with HTR3A. The homomeric complex is not functional. Heteropentameric complexes display properties which resemble that of neuronal serotonin-activated channels in vivo. N-glycosylation is required for membrane localization. Expressed in peripheral neurons, but not in neurons of the central nervous system.

It localises to the postsynaptic cell membrane. The protein localises to the cell membrane. The catalysed reaction is Na(+)(in) = Na(+)(out). The enzyme catalyses K(+)(in) = K(+)(out). It carries out the reaction Ca(2+)(in) = Ca(2+)(out). Forms serotonin (5-hydroxytryptamine/5-HT3)-activated cation-selective channel complexes, which when activated cause fast, depolarizing responses in neurons. The chain is 5-hydroxytryptamine receptor 3B from Rattus norvegicus (Rat).